We begin with the raw amino-acid sequence, 355 residues long: Putative transport protein PH1000 (355 aa).

Transmembrane regions (helical) follow at residues 34 to 54 (VTWI…LPFF), 55 to 75 (SPLF…IKLK), 84 to 104 (AILL…ILVY), 158 to 178 (FSVP…YFFL), 212 to 232 (VWLL…LIFK), 240 to 260 (ILAG…GWMI), 274 to 294 (IIAG…LPDF), and 310 to 330 (VLVL…GLII).

It belongs to the autoinducer-2 exporter (AI-2E) (TC 2.A.86) family.

Its subcellular location is the cell membrane. The polypeptide is Putative transport protein PH1000 (Pyrococcus horikoshii (strain ATCC 700860 / DSM 12428 / JCM 9974 / NBRC 100139 / OT-3)).